The following is a 366-amino-acid chain: Probable methyltransferase-like protein 24 (366 aa).

An N-terminal signal peptide occupies residues 1–29 (MARERPPGRGCGVLRRCLLGAVLLFGLRL). A disordered region spans residues 36-110 (AGPGSPTRSA…GRPRRKGPRW (75 aa)). Over residues 44–63 (SAPPGPAWRPPGPHLPPAPG) the composition is skewed to pro residues. The span at 91–100 (TPEPGCCAPR) shows a compositional bias: low complexity.

It belongs to the methyltransferase superfamily.

It is found in the secreted. Its function is as follows. Probable methyltransferase. The chain is Probable methyltransferase-like protein 24 (METTL24) from Homo sapiens (Human).